The primary structure comprises 540 residues: Glucose-6-phosphate isomerase (540 aa).

Catalysis depends on E350, which acts as the Proton donor. Catalysis depends on residues H381 and K503.

The protein belongs to the GPI family.

The protein resides in the cytoplasm. The enzyme catalyses alpha-D-glucose 6-phosphate = beta-D-fructose 6-phosphate. It participates in carbohydrate biosynthesis; gluconeogenesis. It functions in the pathway carbohydrate degradation; glycolysis; D-glyceraldehyde 3-phosphate and glycerone phosphate from D-glucose: step 2/4. Catalyzes the reversible isomerization of glucose-6-phosphate to fructose-6-phosphate. The chain is Glucose-6-phosphate isomerase from Paraburkholderia phymatum (strain DSM 17167 / CIP 108236 / LMG 21445 / STM815) (Burkholderia phymatum).